The following is a 354-amino-acid chain: UDP-N-acetylglucosamine--N-acetylmuramyl-(pentapeptide) pyrophosphoryl-undecaprenol N-acetylglucosamine transferase (354 aa).

Residues 15-17, Asn127, Arg163, Ser191, Ile242, 261-266, and Gln286 each bind UDP-N-acetyl-alpha-D-glucosamine; these read TGG and ALTVSE.

It belongs to the glycosyltransferase 28 family. MurG subfamily.

Its subcellular location is the cell inner membrane. It carries out the reaction di-trans,octa-cis-undecaprenyl diphospho-N-acetyl-alpha-D-muramoyl-L-alanyl-D-glutamyl-meso-2,6-diaminopimeloyl-D-alanyl-D-alanine + UDP-N-acetyl-alpha-D-glucosamine = di-trans,octa-cis-undecaprenyl diphospho-[N-acetyl-alpha-D-glucosaminyl-(1-&gt;4)]-N-acetyl-alpha-D-muramoyl-L-alanyl-D-glutamyl-meso-2,6-diaminopimeloyl-D-alanyl-D-alanine + UDP + H(+). It functions in the pathway cell wall biogenesis; peptidoglycan biosynthesis. Cell wall formation. Catalyzes the transfer of a GlcNAc subunit on undecaprenyl-pyrophosphoryl-MurNAc-pentapeptide (lipid intermediate I) to form undecaprenyl-pyrophosphoryl-MurNAc-(pentapeptide)GlcNAc (lipid intermediate II). This is UDP-N-acetylglucosamine--N-acetylmuramyl-(pentapeptide) pyrophosphoryl-undecaprenol N-acetylglucosamine transferase from Pasteurella multocida (strain Pm70).